A 174-amino-acid polypeptide reads, in one-letter code: Large ribosomal subunit protein uL16 (174 aa).

The protein belongs to the universal ribosomal protein uL16 family.

This is Large ribosomal subunit protein uL16 from Staphylothermus marinus (strain ATCC 43588 / DSM 3639 / JCM 9404 / F1).